A 944-amino-acid chain; its full sequence is Protein unc-45 homolog A (944 aa).

The disordered stretch occupies residues 1–25; that stretch reads MTVSGPETPEPRPSDPGASSAEQLR. 3 TPR repeats span residues 21–54, 58–91, and 92–125; these read AEQL…GATP, AILH…DGGD, and VKAL…EPKN. Residue lysine 70 is modified to N6-acetyllysine. Lysine 483 is modified (N6-acetyllysine).

Interacts with PGR isoforms A and B as well as with NR3C1 in the absence of ligand, and with HSP90AB1. Binding to HSP90AB1 involves 2 UNC45A monomers per HSP90AB1 dimer. In terms of tissue distribution, detected in spleen, bone marrow, lung and ovary, and at lower levels in testis, kidney, heart and brain (at protein level). Ubiquitous. Detected in uterus, large intestine, kidney, spleen, lung, brain, liver and ovary.

The protein resides in the cytoplasm. It localises to the perinuclear region. Its subcellular location is the nucleus. May act as co-chaperone for HSP90 (Potential). Prevents the stimulation of HSP90AB1 ATPase activity by AHSA1. Positive factor in promoting PGR function in the cell. May be necessary for proper folding of myosin (Potential). Necessary for normal cell proliferation. Necessary for normal myotube formation and myosin accumulation during muscle cell development. May play a role in erythropoiesis in stroma cells in the spleen. This Mus musculus (Mouse) protein is Protein unc-45 homolog A (Unc45a).